The primary structure comprises 314 residues: 4-hydroxy-3-methylbut-2-enyl diphosphate reductase (314 aa).

Position 12 (Cys-12) interacts with [4Fe-4S] cluster. Positions 41 and 74 each coordinate (2E)-4-hydroxy-3-methylbut-2-enyl diphosphate. Dimethylallyl diphosphate-binding residues include His-41 and His-74. His-41 and His-74 together coordinate isopentenyl diphosphate. Cys-96 is a binding site for [4Fe-4S] cluster. His-124 contributes to the (2E)-4-hydroxy-3-methylbut-2-enyl diphosphate binding site. Residue His-124 coordinates dimethylallyl diphosphate. An isopentenyl diphosphate-binding site is contributed by His-124. The active-site Proton donor is the Glu-126. (2E)-4-hydroxy-3-methylbut-2-enyl diphosphate is bound at residue Thr-167. A [4Fe-4S] cluster-binding site is contributed by Cys-197. (2E)-4-hydroxy-3-methylbut-2-enyl diphosphate contacts are provided by Ser-225, Ser-226, Asn-227, and Ser-269. 4 residues coordinate dimethylallyl diphosphate: Ser-225, Ser-226, Asn-227, and Ser-269. Ser-225, Ser-226, Asn-227, and Ser-269 together coordinate isopentenyl diphosphate.

The protein belongs to the IspH family. Requires [4Fe-4S] cluster as cofactor.

The catalysed reaction is isopentenyl diphosphate + 2 oxidized [2Fe-2S]-[ferredoxin] + H2O = (2E)-4-hydroxy-3-methylbut-2-enyl diphosphate + 2 reduced [2Fe-2S]-[ferredoxin] + 2 H(+). It catalyses the reaction dimethylallyl diphosphate + 2 oxidized [2Fe-2S]-[ferredoxin] + H2O = (2E)-4-hydroxy-3-methylbut-2-enyl diphosphate + 2 reduced [2Fe-2S]-[ferredoxin] + 2 H(+). It functions in the pathway isoprenoid biosynthesis; dimethylallyl diphosphate biosynthesis; dimethylallyl diphosphate from (2E)-4-hydroxy-3-methylbutenyl diphosphate: step 1/1. The protein operates within isoprenoid biosynthesis; isopentenyl diphosphate biosynthesis via DXP pathway; isopentenyl diphosphate from 1-deoxy-D-xylulose 5-phosphate: step 6/6. Catalyzes the conversion of 1-hydroxy-2-methyl-2-(E)-butenyl 4-diphosphate (HMBPP) into a mixture of isopentenyl diphosphate (IPP) and dimethylallyl diphosphate (DMAPP). Acts in the terminal step of the DOXP/MEP pathway for isoprenoid precursor biosynthesis. The sequence is that of 4-hydroxy-3-methylbut-2-enyl diphosphate reductase from Histophilus somni (strain 2336) (Haemophilus somnus).